We begin with the raw amino-acid sequence, 407 residues long: Serine/threonine-protein kinase GRIK2 (407 aa).

The segment at 21-64 (SGSRNQQSPKPYDDDTHSCDSDVTSTARGEEEEDEEEVEQKSRS) is disordered. The span at 31–40 (PYDDDTHSCD) shows a compositional bias: basic and acidic residues. In terms of domain architecture, Protein kinase spans 107–370 (YVRVCKIGSG…LKNVSEHPWV (264 aa)). Residues 113–121 (IGSGSYGKV) and Lys-136 contribute to the ATP site. Thr-153 bears the Phosphothreonine; by autocatalysis mark. The Proton acceptor role is filled by Asp-238. Ser-260 is modified (phosphoserine; by KIN10).

This sequence belongs to the protein kinase superfamily. Ser/Thr protein kinase family. As to quaternary structure, associates with the SNF1-related protein kinase (SnRK) complex. Interacts with AL1, a geminivirus (TGMV) protein essential for viral replication. Expressed in shoot apical meristem, leaf primordium and emerging petiole (at protein level).

The catalysed reaction is L-seryl-[protein] + ATP = O-phospho-L-seryl-[protein] + ADP + H(+). The enzyme catalyses L-threonyl-[protein] + ATP = O-phospho-L-threonyl-[protein] + ADP + H(+). Activated when autophosphorylated at Thr-153 and inactivated when phosphorylated at Ser-260 by SnRK1.1/KIN10. In terms of biological role, activates SnRK1.1/KIN10 and SnRK1.2/KIN11 by phosphorylation of their activation-loop 'Thr-198' and 'Thr-176', respectively. Required for the regulation by SnRK1 kinases of the transcription of a large set of genes, the modification the activity of metabolic enzymes, and the control of various nutrient-responsive cellular developmental processes. This Arabidopsis thaliana (Mouse-ear cress) protein is Serine/threonine-protein kinase GRIK2 (GRIK2).